A 536-amino-acid chain; its full sequence is Organic anion transporter 3 (536 aa).

The Cytoplasmic portion of the chain corresponds to 1 to 11 (MTFSEILDRVG). Residue Ser4 is modified to Phosphoserine. A helical membrane pass occupies residues 12–32 (SMGPFQYLHVTLLALPVLGIA). Residues 33-123 (NHNLLQIFTA…LVCSSNKLKE (91 aa)) are Extracellular-facing. 2 N-linked (GlcNAc...) asparagine glycosylation sites follow: Asn81 and Asn86. A helical membrane pass occupies residues 124-144 (MAQSIFMAGILVGGPVIGELS). Topologically, residues 145–158 (DRFGRKPILTWSYL) are cytoplasmic. The chain crosses the membrane as a helical span at residues 159–179 (MLAASGSGAAFSPSLPVYMIF). A topological domain (extracellular) is located at residue Arg180. The helical transmembrane segment at 181-201 (FLCGCSISGISLSTVILNVEW) threads the bilayer. Residues 202–212 (VPTSMRAISST) lie on the Cytoplasmic side of the membrane. The helical transmembrane segment at 213–233 (SIGYCYTIGQFILSGLAYAIP) threads the bilayer. The Extracellular segment spans residues 234–236 (QWR). The chain crosses the membrane as a helical span at residues 237–257 (WLQLTSSAPFFIFSLLSWWVP). The Cytoplasmic segment spans residues 258-327 (ESIRWLVLSG…FRVSILRRVT (70 aa)). The helical transmembrane segment at 328–348 (FCLSLAWFSTGFAYYSLAMGV) threads the bilayer. The Extracellular portion of the chain corresponds to 349 to 354 (EEFGVN). The chain crosses the membrane as a helical span at residues 355–375 (IYILQIIFGGVDIPAKFITIL). Residues 376-383 (SLSYLGRR) lie on the Cytoplasmic side of the membrane. A helical membrane pass occupies residues 384–404 (ITQSFLLLLAGGAILALIFVP). Topologically, residues 405–411 (SEMQLLR) are extracellular. The helical transmembrane segment at 412–432 (TALAVFGKGCLSGSFSCLFLY) threads the bilayer. Residues 433–471 (TSELYPTVLRQTGMGISNVWARVGSMIAPLVKITGELQP) lie on the Cytoplasmic side of the membrane. Residues 472–492 (FIPNVIFGTTALLGGSAAFFL) form a helical membrane-spanning segment. Residues 493-536 (LETLNRPLPETIEDIQNWHKQVQKTKQESEAEKASQIIPLKTGG) lie on the Extracellular side of the membrane. The interval 515-536 (QKTKQESEAEKASQIIPLKTGG) is disordered.

This sequence belongs to the major facilitator (TC 2.A.1) superfamily. Organic cation transporter (TC 2.A.1.19) family. In terms of tissue distribution, expressed in the liver, brain, kidney, choroid plexus and weakly in the eye. Moderately expressed (at protein level) in the brain capillary endothelial cells (BCEC).

Its subcellular location is the basolateral cell membrane. The catalysed reaction is estrone 3-sulfate(out) + glutarate(in) = estrone 3-sulfate(in) + glutarate(out). It carries out the reaction estrone 3-sulfate(in) + 2-oxoglutarate(out) = estrone 3-sulfate(out) + 2-oxoglutarate(in). The enzyme catalyses glutarate(in) + 2-oxoglutarate(out) = glutarate(out) + 2-oxoglutarate(in). It catalyses the reaction urate(in) + 2-oxoglutarate(out) = urate(out) + 2-oxoglutarate(in). The catalysed reaction is taurocholate(out) + glutarate(in) = taurocholate(in) + glutarate(out). It carries out the reaction dehydroepiandrosterone 3-sulfate(out) + glutarate(in) = dehydroepiandrosterone 3-sulfate(in) + glutarate(out). The enzyme catalyses prostaglandin F2alpha(out) + glutarate(in) = prostaglandin F2alpha(in) + glutarate(out). It catalyses the reaction prostaglandin F2alpha(out) + 2-oxoglutarate(in) = prostaglandin F2alpha(in) + 2-oxoglutarate(out). The catalysed reaction is (R)-carnitine(out) + 2-oxoglutarate(in) = (R)-carnitine(in) + 2-oxoglutarate(out). It carries out the reaction glutarate(in) + (R)-carnitine(out) = glutarate(out) + (R)-carnitine(in). The enzyme catalyses prostaglandin E2(out) + 2-oxoglutarate(in) = prostaglandin E2(in) + 2-oxoglutarate(out). It catalyses the reaction prostaglandin E2(out) + glutarate(in) = prostaglandin E2(in) + glutarate(out). The catalysed reaction is urate(in) + glutarate(out) = urate(out) + glutarate(in). It carries out the reaction taurocholate(out) + 2-oxoglutarate(in) = taurocholate(in) + 2-oxoglutarate(out). The enzyme catalyses dehydroepiandrosterone 3-sulfate(out) + 2-oxoglutarate(in) = dehydroepiandrosterone 3-sulfate(in) + 2-oxoglutarate(out). It catalyses the reaction kynurenate(out) + a dicarboxylate(in) = kynurenate(in) + a dicarboxylate(out). The catalysed reaction is (indol-3-yl)acetate(out) + a dicarboxylate(in) = (indol-3-yl)acetate(in) + a dicarboxylate(out). It carries out the reaction indoxyl sulfate(out) + a dicarboxylate(in) = indoxyl sulfate(in) + a dicarboxylate(out). The enzyme catalyses N-benzoylglycine(out) + a dicarboxylate(in) = N-benzoylglycine(in) + a dicarboxylate(out). It catalyses the reaction 3-carboxy-4-methyl-5-propyl-2-furanpropanoate(out) + a dicarboxylate(in) = 3-carboxy-4-methyl-5-propyl-2-furanpropanoate(in) + a dicarboxylate(out). The catalysed reaction is (6R)-L-erythro-5,6,7,8-tetrahydrobiopterin(out) + a dicarboxylate(in) = (6R)-L-erythro-5,6,7,8-tetrahydrobiopterin(in) + a dicarboxylate(out). It carries out the reaction L-erythro-7,8-dihydrobiopterin(out) + a dicarboxylate(in) = L-erythro-7,8-dihydrobiopterin(in) + a dicarboxylate(out). The enzyme catalyses L-sepiapterin(out) + a dicarboxylate(in) = L-sepiapterin(in) + a dicarboxylate(out). In terms of biological role, functions as an organic anion/dicarboxylate exchanger that couples organic anion uptake indirectly to the sodium gradient. Transports organic anions such as estrone 3-sulfate (E1S) and urate in exchange for dicarboxylates such as glutarate or ketoglutarate (2-oxoglutarate). Plays an important role in the excretion of endogenous and exogenous organic anions, especially from the kidney and the brain. E1S transport is pH- and chloride-dependent and may also involve E1S/cGMP exchange. Responsible for the transport of prostaglandin E2 (PGE2) and prostaglandin F2(alpha) (PGF2(alpha)) in the basolateral side of the renal tubule. Involved in the transport of neuroactive tryptophan metabolites kynurenate and xanthurenate. Functions as a biopterin transporters involved in the uptake and the secretion of coenzymes tetrahydrobiopterin (BH4), dihydrobiopterin (BH2) and sepiapterin to urine, thereby determining baseline levels of blood biopterins. May be involved in the basolateral transport of steviol, a metabolite of the popular sugar substitute stevioside. May participate in the detoxification/ renal excretion of drugs and xenobiotics, such as the histamine H(2)-receptor antagonists fexofenadine and cimetidine, the antibiotic benzylpenicillin (PCG), the anionic herbicide 2,4-dichloro-phenoxyacetate (2,4-D), the diagnostic agent p-aminohippurate (PAH), the antiviral acyclovir (ACV), and the mycotoxin ochratoxin (OTA), by transporting these exogenous organic anions across the cell membrane in exchange for dicarboxylates such as 2-oxoglutarate. Contributes to the renal uptake of potent uremic toxins (indoxyl sulfate (IS), indole acetate (IA), hippurate/N-benzoylglycine (HA) and 3-carboxy-4-methyl-5-propyl-2-furanpropionate (CMPF)), pravastatin, PCG, E1S and dehydroepiandrosterone sulfate (DHEAS), and is partly involved in the renal uptake of temocaprilat (an angiotensin-converting enzyme (ACE) inhibitor). May contribute to the release of cortisol in the adrenals. Involved in one of the detoxification systems on the choroid plexus (CP), removes substrates such as E1S or taurocholate (TC), PCG, 2,4-D and PAH, from the cerebrospinal fluid (CSF) to the blood for eventual excretion in urine and bile. Regulates the CSF concentration of histamine H(2)-receptor antagonists cimetidine and ranitidine at the CP. Also contributes to the uptake of several other organic compounds such as the prostanoids prostaglandin E(2) and prostaglandin F(2-alpha), L-carnitine, and the therapeutic drugs allopurinol, 6-mercaptopurine (6-MP) and 5-fluorouracil (5-FU). Mediates the uptake from brain of organic anions, such as E1S, PAH, and OTA. Mediates the transport of PAH, PCG, and the statins pravastatin and pitavastatin, from the cerebrum into the blood circulation across the blood-brain barrier (BBB). In summary, plays a role in the efflux of drugs and xenobiotics, helping reduce their undesired toxicological effects on the body. The sequence is that of Organic anion transporter 3 (Slc22a8) from Rattus norvegicus (Rat).